Here is a 591-residue protein sequence, read N- to C-terminus: Inactive metallocarboxypeptidase ECM14 (591 aa).

The first 21 residues, 1 to 21, serve as a signal peptide directing secretion; sequence MRLFSHLAVLAILACAVPITA. Residues 22 to 175 constitute a propeptide that is removed on maturation; that stretch reads IPSFLSNSYP…QTIYESYPSS (154 aa). In terms of domain architecture, Peptidase M14 spans 203–523; it reads DYQPFSVIVP…NAVMVLGRFL (321 aa). The Zn(2+) site is built by His-265 and Glu-268. Residues 265-268, Arg-323, and 340-341 each bind substrate; these read HARE and DR. Cys-334 and Cys-357 are joined by a disulfide. Residues Asn-350, Asn-381, and Asn-386 are each glycosylated (N-linked (GlcNAc...) asparagine). His-397 contributes to the Zn(2+) binding site. 398–399 contributes to the substrate binding site; the sequence is SY. The interval 533–591 is disordered; that stretch reads DWEDESQRPKADEDDIPSENELDENDDSWIPYDYRNHDDQNEGEGYDNDEWGFRRRRKR. Acidic residues-rich tracts occupy residues 544 to 559 and 573 to 582; these read DEDD…ENDD and NEGEGYDNDE.

The protein belongs to the peptidase M14 family. Requires Zn(2+) as cofactor.

The protein localises to the vacuole. The protein resides in the secreted. In terms of biological role, inactive carboxypeptidase that may play a role in cell wall organization and biogenesis. In Paracoccidioides brasiliensis (strain Pb18), this protein is Inactive metallocarboxypeptidase ECM14 (ECM14).